We begin with the raw amino-acid sequence, 265 residues long: Glutamate racemase (265 aa).

Substrate is bound by residues 12–13 and 44–45; these read DS and YG. The Proton donor/acceptor role is filled by Cys-75. 76–77 lines the substrate pocket; that stretch reads NT. The Proton donor/acceptor role is filled by Cys-186. 187 to 188 is a binding site for substrate; it reads TH.

Belongs to the aspartate/glutamate racemases family.

It catalyses the reaction L-glutamate = D-glutamate. The protein operates within cell wall biogenesis; peptidoglycan biosynthesis. In terms of biological role, provides the (R)-glutamate required for cell wall biosynthesis. The sequence is that of Glutamate racemase from Pseudomonas aeruginosa (strain ATCC 15692 / DSM 22644 / CIP 104116 / JCM 14847 / LMG 12228 / 1C / PRS 101 / PAO1).